Here is a 333-residue protein sequence, read N- to C-terminus: Dipeptide transport system permease protein DppB (333 aa).

Transmembrane regions (helical) follow at residues 9-29 (ILMV…LVHF), 103-123 (AFFA…IAAV), 136-156 (ASLT…ILYV), 197-217 (AVKS…AIIT), 256-276 (LIPV…GAVL), and 306-326 (VLII…LYGV). The ABC transmembrane type-1 domain occupies 96 to 328 (FPATAELAFF…TVDLLYGVVN (233 aa)).

This sequence belongs to the binding-protein-dependent transport system permease family. OppBC subfamily.

It is found in the cell inner membrane. In terms of biological role, part of the ABC transporter DppBCDF involved in dipeptide transport. Responsible for the translocation of the substrate across the membrane. In Haemophilus influenzae (strain ATCC 51907 / DSM 11121 / KW20 / Rd), this protein is Dipeptide transport system permease protein DppB (dppB).